The sequence spans 72 residues: Translation initiation factor IF-1 (72 aa).

In terms of domain architecture, S1-like spans 1 to 72 (MAKEEMLEFP…TKGRINYRFK (72 aa)).

The protein belongs to the IF-1 family. As to quaternary structure, component of the 30S ribosomal translation pre-initiation complex which assembles on the 30S ribosome in the order IF-2 and IF-3, IF-1 and N-formylmethionyl-tRNA(fMet); mRNA recruitment can occur at any time during PIC assembly.

The protein localises to the cytoplasm. Functionally, one of the essential components for the initiation of protein synthesis. Stabilizes the binding of IF-2 and IF-3 on the 30S subunit to which N-formylmethionyl-tRNA(fMet) subsequently binds. Helps modulate mRNA selection, yielding the 30S pre-initiation complex (PIC). Upon addition of the 50S ribosomal subunit IF-1, IF-2 and IF-3 are released leaving the mature 70S translation initiation complex. In Jannaschia sp. (strain CCS1), this protein is Translation initiation factor IF-1.